The chain runs to 208 residues: Small ribosomal subunit protein uS4 (208 aa).

Residues 98–168 enclose the S4 RNA-binding domain; it reads RRLDNVVFRL…DSLDTVVRRG (71 aa).

This sequence belongs to the universal ribosomal protein uS4 family. Part of the 30S ribosomal subunit. Contacts protein S5. The interaction surface between S4 and S5 is involved in control of translational fidelity.

Its function is as follows. One of the primary rRNA binding proteins, it binds directly to 16S rRNA where it nucleates assembly of the body of the 30S subunit. In terms of biological role, with S5 and S12 plays an important role in translational accuracy. This is Small ribosomal subunit protein uS4 from Desulforapulum autotrophicum (strain ATCC 43914 / DSM 3382 / VKM B-1955 / HRM2) (Desulfobacterium autotrophicum).